The chain runs to 512 residues: Maturase K (512 aa).

The protein belongs to the intron maturase 2 family. MatK subfamily.

It localises to the plastid. The protein localises to the chloroplast. Functionally, usually encoded in the trnK tRNA gene intron. Probably assists in splicing its own and other chloroplast group II introns. The chain is Maturase K from Ginkgo biloba (Ginkgo).